Consider the following 177-residue polypeptide: MASSINGNGFITTTVDELLSWGRRNALWPVTIGLACCAIEMMHAAASRFDIDRLGMIFRASPRQADVLIVAGTVVNKVAPMLKLVWDQMPEPKWCISMGGCASAGGPFPTYSTLQGIDRIIPVDVYIPGCPPTPQGLIYGLLELQRKIREKKVTRYEKAFEEFKKDLSPELLNGVGV.

Positions 36, 37, 101, and 130 each coordinate [4Fe-4S] cluster.

The protein belongs to the complex I 20 kDa subunit family. NDH-1 is composed of 14 different subunits. Subunits NuoB, C, D, E, F, and G constitute the peripheral sector of the complex. [4Fe-4S] cluster is required as a cofactor.

The protein resides in the cell inner membrane. It catalyses the reaction a quinone + NADH + 5 H(+)(in) = a quinol + NAD(+) + 4 H(+)(out). Its function is as follows. NDH-1 shuttles electrons from NADH, via FMN and iron-sulfur (Fe-S) centers, to quinones in the respiratory chain. The immediate electron acceptor for the enzyme in this species is believed to be ubiquinone. Couples the redox reaction to proton translocation (for every two electrons transferred, four hydrogen ions are translocated across the cytoplasmic membrane), and thus conserves the redox energy in a proton gradient. In Hydrogenobaculum sp. (strain Y04AAS1), this protein is NADH-quinone oxidoreductase subunit B.